The sequence spans 189 residues: Chitin synthase 2 (189 aa).

This sequence belongs to the chitin synthase family. Class II subfamily.

The protein resides in the cell membrane. The enzyme catalyses [(1-&gt;4)-N-acetyl-beta-D-glucosaminyl](n) + UDP-N-acetyl-alpha-D-glucosamine = [(1-&gt;4)-N-acetyl-beta-D-glucosaminyl](n+1) + UDP + H(+). Polymerizes chitin, a structural polymer of the cell wall and septum, by transferring the sugar moiety of UDP-GlcNAc to the non-reducing end of the growing chitin polymer. The chain is Chitin synthase 2 (CHS2) from Exophiala exophialae (Black yeast-like fungus).